Consider the following 185-residue polypeptide: Acireductone dioxygenase (185 aa).

The segment at M1–E23 is disordered. Fe(2+)-binding residues include H102, H104, E108, and H146. Ni(2+) is bound by residues H102, H104, E108, and H146.

It belongs to the acireductone dioxygenase (ARD) family. In terms of assembly, monomer. Fe(2+) is required as a cofactor. Ni(2+) serves as cofactor.

It catalyses the reaction 1,2-dihydroxy-5-(methylsulfanyl)pent-1-en-3-one + O2 = 3-(methylsulfanyl)propanoate + CO + formate + 2 H(+). The enzyme catalyses 1,2-dihydroxy-5-(methylsulfanyl)pent-1-en-3-one + O2 = 4-methylsulfanyl-2-oxobutanoate + formate + 2 H(+). The protein operates within amino-acid biosynthesis; L-methionine biosynthesis via salvage pathway; L-methionine from S-methyl-5-thio-alpha-D-ribose 1-phosphate: step 5/6. Catalyzes 2 different reactions between oxygen and the acireductone 1,2-dihydroxy-3-keto-5-methylthiopentene (DHK-MTPene) depending upon the metal bound in the active site. Fe-containing acireductone dioxygenase (Fe-ARD) produces formate and 2-keto-4-methylthiobutyrate (KMTB), the alpha-ketoacid precursor of methionine in the methionine recycle pathway. Ni-containing acireductone dioxygenase (Ni-ARD) produces methylthiopropionate, carbon monoxide and formate, and does not lie on the methionine recycle pathway. In Prochlorococcus marinus (strain MIT 9303), this protein is Acireductone dioxygenase.